The sequence spans 81 residues: uncharacterized protein (81 aa).

It to yeast YDL157C.

Its subcellular location is the mitochondrion. This is an uncharacterized protein from Schizosaccharomyces pombe (strain 972 / ATCC 24843) (Fission yeast).